We begin with the raw amino-acid sequence, 177 residues long: Nucleoside triphosphate/diphosphate phosphatase (177 aa).

Residue R23 is the Proton donor of the active site. The Mg(2+) site is built by N87, D103, D105, D107, D120, and E123.

Belongs to the Ntdp family. Requires Mg(2+) as cofactor.

The catalysed reaction is a ribonucleoside 5'-triphosphate + H2O = a ribonucleoside 5'-diphosphate + phosphate + H(+). It carries out the reaction a ribonucleoside 5'-diphosphate + H2O = a ribonucleoside 5'-phosphate + phosphate + H(+). Its function is as follows. Has nucleoside phosphatase activity towards nucleoside triphosphates and nucleoside diphosphates. The polypeptide is Nucleoside triphosphate/diphosphate phosphatase (Streptococcus thermophilus (strain CNRZ 1066)).